Reading from the N-terminus, the 481-residue chain is 3-isopropylmalate dehydratase large subunit (481 aa).

[4Fe-4S] cluster-binding residues include Cys-357, Cys-417, and Cys-420. Residues 429-441 (SPGQRCASTSNRN) are compositionally biased toward polar residues. Positions 429–451 (SPGQRCASTSNRNFEGRQGKGGR) are disordered.

This sequence belongs to the aconitase/IPM isomerase family. LeuC type 1 subfamily. Heterodimer of LeuC and LeuD. [4Fe-4S] cluster is required as a cofactor.

The enzyme catalyses (2R,3S)-3-isopropylmalate = (2S)-2-isopropylmalate. It functions in the pathway amino-acid biosynthesis; L-leucine biosynthesis; L-leucine from 3-methyl-2-oxobutanoate: step 2/4. Functionally, catalyzes the isomerization between 2-isopropylmalate and 3-isopropylmalate, via the formation of 2-isopropylmaleate. The protein is 3-isopropylmalate dehydratase large subunit of Mycobacterium sp. (strain JLS).